Consider the following 599-residue polypeptide: Serine/threonine-protein kinase Nek1 (599 aa).

The Protein kinase domain occupies tyrosine 4–leucine 258. Residues isoleucine 10–alanine 18 and lysine 33 contribute to the ATP site. The active-site Proton acceptor is the aspartate 129. Disordered stretches follow at residues serine 364–lysine 386, serine 461–cysteine 482, and aspartate 504–serine 542. Residues aspartate 511 to serine 530 show a composition bias toward low complexity.

It belongs to the protein kinase superfamily. NEK Ser/Thr protein kinase family. NIMA subfamily. In terms of tissue distribution, expressed in anthers, pistils and leaves.

The catalysed reaction is L-seryl-[protein] + ATP = O-phospho-L-seryl-[protein] + ADP + H(+). It catalyses the reaction L-threonyl-[protein] + ATP = O-phospho-L-threonyl-[protein] + ADP + H(+). May be involved in plant development processes. The chain is Serine/threonine-protein kinase Nek1 from Oryza sativa subsp. japonica (Rice).